The chain runs to 449 residues: Ktr system potassium uptake protein D (449 aa).

A run of 10 helical transmembrane segments spans residues 17-37 (LIALYYFLAVTVAVILLSLPA), 46-66 (TFIDALFTAVSSVSVTGLTVV), 75-95 (IGIFILAFVLQFGGIGIMTLG), 133-153 (VLFLILWIEFFGGLILGTYFL), 194-214 (FVQFITMLLIIFGAIGFPVLV), 235-255 (ITTITFGSLVLFGAIGIFALE), 297-317 (LFFICALMFIGASPSSVGGGI), 355-375 (LVVTMMAILLVFGATLILTIT), 380-400 (LLELLFEVCSAFGTTGLSLGI), and 411-431 (VIMIVMFIGRIGILTFLYLIG).

It belongs to the TrkH potassium transport family. Ktr (TC 2.A.38.4) subfamily. In terms of assembly, homodimer. Part of the KtrCD complex formed by an octameric catalytic ring of KtrC and a membrane associated dimer of KtrD forming a potassium channel.

The protein resides in the cell membrane. Functionally, integral membrane subunit of the KtrCD potassium uptake transporter. The 2 major potassium transporter complexes KtrAB and KtrCD confer resistance to both suddenly imposed and prolonged osmotic stress. This is Ktr system potassium uptake protein D (ktrD) from Bacillus subtilis (strain 168).